The sequence spans 337 residues: Ornithine carbamoyltransferase, catabolic (337 aa).

Carbamoyl phosphate-binding positions include 57–60, Gln-84, Arg-108, and 135–138; these read STRT and HPTQ. L-ornithine contacts are provided by residues Asn-167, Asp-231, and 235–236; that span reads SM. Carbamoyl phosphate contacts are provided by residues 272–273 and Arg-317; that span reads CL.

The protein belongs to the aspartate/ornithine carbamoyltransferase superfamily. OTCase family.

The protein resides in the cytoplasm. The catalysed reaction is carbamoyl phosphate + L-ornithine = L-citrulline + phosphate + H(+). It participates in amino-acid degradation; L-arginine degradation via ADI pathway; carbamoyl phosphate from L-arginine: step 2/2. Reversibly catalyzes the transfer of the carbamoyl group from carbamoyl phosphate (CP) to the N(epsilon) atom of ornithine (ORN) to produce L-citrulline. The polypeptide is Ornithine carbamoyltransferase, catabolic (arcB) (Streptococcus agalactiae).